A 415-amino-acid chain; its full sequence is Gamma-glutamyl phosphate reductase (415 aa).

It belongs to the gamma-glutamyl phosphate reductase family.

Its subcellular location is the cytoplasm. It carries out the reaction L-glutamate 5-semialdehyde + phosphate + NADP(+) = L-glutamyl 5-phosphate + NADPH + H(+). It participates in amino-acid biosynthesis; L-proline biosynthesis; L-glutamate 5-semialdehyde from L-glutamate: step 2/2. Catalyzes the NADPH-dependent reduction of L-glutamate 5-phosphate into L-glutamate 5-semialdehyde and phosphate. The product spontaneously undergoes cyclization to form 1-pyrroline-5-carboxylate. The protein is Gamma-glutamyl phosphate reductase of Thermotoga sp. (strain RQ2).